Reading from the N-terminus, the 204-residue chain is Pre-mRNA leakage protein 1 (204 aa).

Positions 104–172 (YLVGRELGHS…NGTCLNNVVI (69 aa)) constitute an FHA domain.

Belongs to the pre-mRNA retention and splicing (RES) complex composed of at least BUD13, IST3 and PML1.

The protein resides in the cytoplasm. It localises to the nucleus. Required for efficient splicing and pre-mRNA nuclear retention. This Saccharomyces cerevisiae (strain ATCC 204508 / S288c) (Baker's yeast) protein is Pre-mRNA leakage protein 1 (PML1).